The primary structure comprises 274 residues: MAVDDLKVKPMKDQPDQKSNGKKPKGLRFLSSPWWCPAAVALGVLCLGSLMTIIMLGMQLLQVSDLLKQQQANLTLQENILEGQVLAQQQAEAASQESQRELKEMIETLAKRLDEKSKKQMELNHQYLNLQEALKRMDNFSGPCPEDWLWHGKNCYLFSSGSFNWESSQEKCLSLDAQLLKINSTEDLGFIQQATSHSSFPFWMGLSRRKPDYSWLWEDGSPLMPHLFRFQGAVSQRYPSGTCAYIQKGNVFAENCILVAYSICQKKANLLRSE.

Positions Met-1 to Asp-16 are enriched in basic and acidic residues. The interval Met-1–Lys-25 is disordered. Over Met-1–Ser-31 the chain is Cytoplasmic. The helical; Signal-anchor for type II membrane protein transmembrane segment at Ser-32–Ile-54 threads the bilayer. Residues Cys-36 and Cys-46 are each lipidated (S-palmitoyl cysteine). Residues Met-55 to Trp-150 are neck. Residues Met-55–Glu-274 lie on the Extracellular side of the membrane. N-linked (GlcNAc...) asparagine glycans are attached at residues Asn-73 and Asn-139. Residues Gln-84–Asn-139 are a coiled coil. 3 cysteine pairs are disulfide-bonded: Cys-144/Cys-155, Cys-172/Cys-264, and Cys-243/Cys-256. The 115-residue stretch at His-151–Gln-265 folds into the C-type lectin domain.

As to quaternary structure, homodimer; disulfide-linked. May form a hexamer composed of 3 homodimers. Interacts with HSP70. In terms of processing, N-glycosylated.

It is found in the cell membrane. Its subcellular location is the membrane raft. The protein localises to the secreted. Functionally, receptor that mediates the recognition, internalization and degradation of oxidatively modified low density lipoprotein (oxLDL) by vascular endothelial cells. OxLDL is a marker of atherosclerosis that induces vascular endothelial cell activation and dysfunction, resulting in pro-inflammatory responses, pro-oxidative conditions and apoptosis. Its association with oxLDL induces the activation of NF-kappa-B through an increased production of intracellular reactive oxygen and a variety of pro-atherogenic cellular responses including a reduction of nitric oxide (NO) release, monocyte adhesion and apoptosis. In addition to binding oxLDL, it acts as a receptor for the HSP70 protein involved in antigen cross-presentation to naive T-cells in dendritic cells, thereby participating in cell-mediated antigen cross-presentation. Also involved in inflammatory process, by acting as a leukocyte-adhesion molecule at the vascular interface in endotoxin-induced inflammation. Also acts as a receptor for advanced glycation end (AGE) products, activated platelets, monocytes, apoptotic cells and both Gram-negative and Gram-positive bacteria. The protein is Oxidized low-density lipoprotein receptor 1 (OLR1) of Oryctolagus cuniculus (Rabbit).